We begin with the raw amino-acid sequence, 413 residues long: NADH-quinone oxidoreductase subunit D (413 aa).

The protein belongs to the complex I 49 kDa subunit family. NDH-1 is composed of 14 different subunits. Subunits NuoB, C, D, E, F, and G constitute the peripheral sector of the complex.

Its subcellular location is the cell inner membrane. It catalyses the reaction a quinone + NADH + 5 H(+)(in) = a quinol + NAD(+) + 4 H(+)(out). In terms of biological role, NDH-1 shuttles electrons from NADH, via FMN and iron-sulfur (Fe-S) centers, to quinones in the respiratory chain. The immediate electron acceptor for the enzyme in this species is believed to be ubiquinone. Couples the redox reaction to proton translocation (for every two electrons transferred, four hydrogen ions are translocated across the cytoplasmic membrane), and thus conserves the redox energy in a proton gradient. The protein is NADH-quinone oxidoreductase subunit D of Rhodobacter capsulatus (Rhodopseudomonas capsulata).